Here is a 300-residue protein sequence, read N- to C-terminus: GTP cyclohydrolase FolE2 (300 aa).

This sequence belongs to the GTP cyclohydrolase IV family.

It catalyses the reaction GTP + H2O = 7,8-dihydroneopterin 3'-triphosphate + formate + H(+). It participates in cofactor biosynthesis; 7,8-dihydroneopterin triphosphate biosynthesis; 7,8-dihydroneopterin triphosphate from GTP: step 1/1. Functionally, converts GTP to 7,8-dihydroneopterin triphosphate. The chain is GTP cyclohydrolase FolE2 from Bacillus licheniformis (strain ATCC 14580 / DSM 13 / JCM 2505 / CCUG 7422 / NBRC 12200 / NCIMB 9375 / NCTC 10341 / NRRL NRS-1264 / Gibson 46).